The sequence spans 116 residues: Beta-D-galactosidase Rv1717 (116 aa).

One can recognise a Cupin type-2 domain in the interval 40–107 (LSVYRPGGTA…TDRQALLLVT (68 aa)).

It localises to the secreted. It is found in the cell wall. The enzyme catalyses Hydrolysis of terminal non-reducing beta-D-galactose residues in beta-D-galactosides.. Beta-galactosidase activity is activated by Mg(2+) and significantly inhibited by Ca(2+), Cd(2+), Fe(2+), Ni(2+), Cu(2+) and Zn(2+). Inhibited by EDTA. Beta-D-galactopyranosidase that specifically recognizes the beta-glycosidic bonds formed with beta-D-galactopyranose (beta-D-Gal) or N-acetylgalactosamine (beta-D-GalNAc). May target the galactoside linkages in the exopolysaccharide component of the mycobacterial extracellular polymeric substance (EPS) and help dispersal of Mtb bacteria from a deteriorating biofilm. The chain is Beta-D-galactosidase Rv1717 from Mycobacterium tuberculosis (strain ATCC 25618 / H37Rv).